The chain runs to 300 residues: Acetyl-coenzyme A carboxylase carboxyl transferase subunit beta 2 (300 aa).

The CoA carboxyltransferase N-terminal domain occupies 26–294; the sequence is VWIKCPSCRE…ATAHKSEPIV (269 aa). Residues cysteine 30, cysteine 33, cysteine 49, and cysteine 51 each coordinate Zn(2+). The C4-type zinc-finger motif lies at 30–51; that stretch reads CPSCRELIYHKQLAERMKVCRC.

It belongs to the AccD/PCCB family. As to quaternary structure, acetyl-CoA carboxylase is a heterohexamer composed of biotin carboxyl carrier protein (AccB), biotin carboxylase (AccC) and two subunits each of ACCase subunit alpha (AccA) and ACCase subunit beta (AccD). Zn(2+) serves as cofactor.

The protein resides in the cytoplasm. It carries out the reaction N(6)-carboxybiotinyl-L-lysyl-[protein] + acetyl-CoA = N(6)-biotinyl-L-lysyl-[protein] + malonyl-CoA. It functions in the pathway lipid metabolism; malonyl-CoA biosynthesis; malonyl-CoA from acetyl-CoA: step 1/1. Its function is as follows. Component of the acetyl coenzyme A carboxylase (ACC) complex. Biotin carboxylase (BC) catalyzes the carboxylation of biotin on its carrier protein (BCCP) and then the CO(2) group is transferred by the transcarboxylase to acetyl-CoA to form malonyl-CoA. This is Acetyl-coenzyme A carboxylase carboxyl transferase subunit beta 2 from Roseiflexus sp. (strain RS-1).